A 402-amino-acid chain; its full sequence is Apolipoprotein L3 (402 aa).

This sequence belongs to the apolipoprotein L family. As to expression, widely expressed; the highest levels are in prostate, lung and placenta; also detected in kidney, bone marrow, spleen, thymus, spinal cord, adrenal gland, salivary gland, trachea and mammary gland; levels are low in brain, heart, fetal liver, pancreas and testis.

The protein localises to the cytoplasm. Its function is as follows. May affect the movement of lipids in the cytoplasm or allow the binding of lipids to organelles. This Homo sapiens (Human) protein is Apolipoprotein L3 (APOL3).